A 751-amino-acid polypeptide reads, in one-letter code: Leucine-rich repeat-containing protein 56 homolog (751 aa).

Residues 1–149 (MKKSTVLDAR…IDKSRDNGQL (149 aa)) form a disordered region. Residues 13-22 (GPLPRRPQQP) are compositionally biased toward pro residues. Composition is skewed to polar residues over residues 28-39 (RNSSQVEKNNAR) and 60-87 (HSQSQSLDTSFAPNTNTTLGSTDVNLNS). LRR repeat units lie at residues 210 to 235 (MPQLNSLKLNNSRITELRVLGTNYAN), 236 to 256 (LRRLWISNCLVSSVSGVGACA), 258 to 279 (VLEELYASFNSISDIDALTEVS), 280 to 304 (STLQVVDLEGNDIRDTDMLKRTLPQ), and 307 to 328 (KMKHLVLKGNPVASSETIVELS). 3 disordered regions span residues 430–538 (SRSH…QRQQ), 645–698 (TCTH…EKDW), and 717–751 (EAALKERVQGSKEVDGGGLEKVESEDEEDVSPVVF). Composition is skewed to polar residues over residues 456 to 471 (KNSQSTASSGDSTNQG) and 662 to 671 (QQEQPTTAGA). The segment covering 717 to 738 (EAALKERVQGSKEVDGGGLEKV) has biased composition (basic and acidic residues). The segment covering 739 to 751 (ESEDEEDVSPVVF) has biased composition (acidic residues).

It belongs to the LRRC56 family.

The protein localises to the cell projection. It is found in the cilium. It localises to the flagellum. In terms of biological role, required for the assembly of dynein arms in the distal portion of flagellum axoneme. In Trypanosoma brucei brucei (strain 927/4 GUTat10.1), this protein is Leucine-rich repeat-containing protein 56 homolog.